The following is a 179-amino-acid chain: UPF0227 protein VP0969 (179 aa).

It belongs to the UPF0227 family.

In Vibrio parahaemolyticus serotype O3:K6 (strain RIMD 2210633), this protein is UPF0227 protein VP0969.